Here is a 318-residue protein sequence, read N- to C-terminus: Small ribosomal subunit biogenesis GTPase RsgA (318 aa).

The 165-residue stretch at 82 to 246 (RQDEIRTKSF…LIDSPGFQEF (165 aa)) folds into the CP-type G domain. Residues 132 to 135 (NKSD) and 186 to 194 (GPSGAGKST) contribute to the GTP site. 4 residues coordinate Zn(2+): Cys-270, Cys-275, His-277, and Cys-283.

This sequence belongs to the TRAFAC class YlqF/YawG GTPase family. RsgA subfamily. In terms of assembly, monomer. Associates with 30S ribosomal subunit, binds 16S rRNA. Zn(2+) is required as a cofactor.

The protein resides in the cytoplasm. Functionally, one of several proteins that assist in the late maturation steps of the functional core of the 30S ribosomal subunit. Helps release RbfA from mature subunits. May play a role in the assembly of ribosomal proteins into the subunit. Circularly permuted GTPase that catalyzes slow GTP hydrolysis, GTPase activity is stimulated by the 30S ribosomal subunit. This Variovorax paradoxus (strain S110) protein is Small ribosomal subunit biogenesis GTPase RsgA.